Consider the following 143-residue polypeptide: Putative complexin-1 (143 aa).

Positions 16 to 72 are disordered; sequence EVTGGLGMKDDGGEKTETGEDPEVIAARLEQEERRKEKHRKMENEREKMRQGIRDKY. 2 stretches are compositionally biased toward basic and acidic residues: residues 23-33 and 44-72; these read MKDDGGEKTET and LEQE…RDKY. Residues 40–71 adopt a coiled-coil conformation; sequence IAARLEQEERRKEKHRKMENEREKMRQGIRDK.

It belongs to the complexin/synaphin family.

The protein localises to the cytoplasm. It localises to the cytosol. Positively regulates a late step in synaptic vesicle exocytosis. The protein is Putative complexin-1 (cpx-1) of Caenorhabditis elegans.